Reading from the N-terminus, the 635-residue chain is ATP-dependent zinc metalloprotease FtsH (635 aa).

The Cytoplasmic portion of the chain corresponds to 1-4 (MVKN). A helical transmembrane segment spans residues 5-25 (LVLWVVVAVIMMTAYQSFNSS). Residues 26–97 (SVENSTDYTT…VEGTPFERRG (72 aa)) are Periplasmic-facing. A helical transmembrane segment spans residues 98–118 (FLSQILISWFPMLFLVGVWVF). At 119–635 (FMRQMQGGGG…AVENTDDFNV (517 aa)) the chain is on the cytoplasmic side. An ATP-binding site is contributed by 191–198 (GPPGTGKT). His413 lines the Zn(2+) pocket. The active site involves Glu414. Zn(2+) contacts are provided by His417 and Asp491. Residues 593–635 (NREPVTPPSGWGEPKTQQAAYANSTTNDTKPESAVENTDDFNV) are disordered. The segment covering 607–620 (KTQQAAYANSTTND) has biased composition (polar residues).

It in the central section; belongs to the AAA ATPase family. The protein in the C-terminal section; belongs to the peptidase M41 family. As to quaternary structure, homohexamer. Requires Zn(2+) as cofactor.

The protein localises to the cell inner membrane. Functionally, acts as a processive, ATP-dependent zinc metallopeptidase for both cytoplasmic and membrane proteins. Plays a role in the quality control of integral membrane proteins. The protein is ATP-dependent zinc metalloprotease FtsH of Haemophilus influenzae (strain ATCC 51907 / DSM 11121 / KW20 / Rd).